The following is a 257-amino-acid chain: 5-oxoprolinase subunit A (257 aa).

The protein belongs to the LamB/PxpA family. Forms a complex composed of PxpA, PxpB and PxpC.

It carries out the reaction 5-oxo-L-proline + ATP + 2 H2O = L-glutamate + ADP + phosphate + H(+). Functionally, catalyzes the cleavage of 5-oxoproline to form L-glutamate coupled to the hydrolysis of ATP to ADP and inorganic phosphate. The polypeptide is 5-oxoprolinase subunit A (Natranaerobius thermophilus (strain ATCC BAA-1301 / DSM 18059 / JW/NM-WN-LF)).